Consider the following 375-residue polypeptide: Putative actin-26 (375 aa).

The protein belongs to the actin family.

It localises to the cytoplasm. Its subcellular location is the cytoskeleton. It carries out the reaction ATP + H2O = ADP + phosphate + H(+). Functionally, actins are highly conserved proteins that are involved in various types of cell motility and are ubiquitously expressed in all eukaryotic cells. Multiple isoforms are involved in various cellular functions such as cytoskeleton structure, cell mobility, chromosome movement and muscle contraction. The sequence is that of Putative actin-26 (act26) from Dictyostelium discoideum (Social amoeba).